We begin with the raw amino-acid sequence, 729 residues long: Rho GTPase-activating protein 28 (729 aa).

Residues 1–78 are disordered; sequence MEVEDSGGVV…ASVDSSASME (78 aa). Over residues 37 to 49 the composition is skewed to basic residues; it reads LSRKSIPRCRRIN. Low complexity predominate over residues 63–76; that stretch reads SRSNSQASVDSSAS. At Ser70 the chain carries Phosphoserine. Phosphothreonine is present on Thr164. The disordered stretch occupies residues 180 to 234; it reads FGVSESPPSDSCEHATQLDGTKEEKDLPGVTKTSRPLPDDASLSSTTLSNGAQDE. Positions 221–231 are enriched in polar residues; that stretch reads SLSSTTLSNGA. The Rho-GAP domain maps to 384–581; it reads VPLTVLLDND…LMLKYQKILW (198 aa).

In terms of biological role, GTPase activator for the Rho-type GTPases by converting them to an inactive GDP-bound state. This is Rho GTPase-activating protein 28 (Arhgap28) from Mus musculus (Mouse).